We begin with the raw amino-acid sequence, 1252 residues long: ATP-dependent helicase/nuclease subunit A (1252 aa).

One can recognise a UvrD-like helicase ATP-binding domain in the interval 6–489 (TNWTEEQKEA…VLLYKNFRSR (484 aa)). Position 27-34 (27-34 (AAAGSGKT)) interacts with ATP. In terms of domain architecture, UvrD-like helicase C-terminal spans 523-811 (ANYEEIEENL…RIMSIHKSKG (289 aa)).

Belongs to the helicase family. AddA subfamily. As to quaternary structure, heterodimer of AddA and AddB/RexB. The cofactor is Mg(2+).

The catalysed reaction is Couples ATP hydrolysis with the unwinding of duplex DNA by translocating in the 3'-5' direction.. It catalyses the reaction ATP + H2O = ADP + phosphate + H(+). Its function is as follows. The heterodimer acts as both an ATP-dependent DNA helicase and an ATP-dependent, dual-direction single-stranded exonuclease. Recognizes the chi site generating a DNA molecule suitable for the initiation of homologous recombination. The AddA nuclease domain is required for chi fragment generation; this subunit has the helicase and 3' -&gt; 5' nuclease activities. This chain is ATP-dependent helicase/nuclease subunit A, found in Clostridium acetobutylicum (strain ATCC 824 / DSM 792 / JCM 1419 / IAM 19013 / LMG 5710 / NBRC 13948 / NRRL B-527 / VKM B-1787 / 2291 / W).